A 399-amino-acid polypeptide reads, in one-letter code: Accessory Sec system protein translocase subunit SecY2 (399 aa).

10 helical membrane-spanning segments follow: residues 14–34, 60–80, 102–122, 128–148, 152–172, 183–203, 237–257, 272–292, 335–355, and 362–382; these read IFFT…SIVS, LNIF…LTLI, ALTL…YINK, SNML…VWLA, TTYG…KSIF, ASLI…LFFI, ISIM…NFIG, FTNP…GYFL, WFGS…ALLV, and VYFT…AETI.

Belongs to the SecY/SEC61-alpha family. SecY2 subfamily. Component of the accessory SecA2/SecY2 protein translocase complex required to export cell wall proteins. May form heterotrimers with SecE and SecG subunits.

The protein resides in the cell membrane. Part of the accessory SecA2/SecY2 system specifically required for export of possible cell wall proteins. The central subunit of a protein translocation channel. The sequence is that of Accessory Sec system protein translocase subunit SecY2 from Staphylococcus epidermidis (strain ATCC 12228 / FDA PCI 1200).